Here is an 89-residue protein sequence, read N- to C-terminus: Small ribosomal subunit protein uS17 (89 aa).

Belongs to the universal ribosomal protein uS17 family. In terms of assembly, part of the 30S ribosomal subunit.

In terms of biological role, one of the primary rRNA binding proteins, it binds specifically to the 5'-end of 16S ribosomal RNA. In Chlorobium chlorochromatii (strain CaD3), this protein is Small ribosomal subunit protein uS17.